A 327-amino-acid chain; its full sequence is Probable protein phosphatase 2C 59 (327 aa).

Positions 1-24 (MREVLLLGSLVVLALLSLFPCCSC) are cleaved as a signal peptide. The PPM-type phosphatase domain occupies 64-310 (SYGYASSPGK…DNITCLVVRF (247 aa)). Mn(2+) is bound by residues D100, G101, D262, and D301.

Belongs to the PP2C family. Mg(2+) serves as cofactor. Requires Mn(2+) as cofactor.

The enzyme catalyses O-phospho-L-seryl-[protein] + H2O = L-seryl-[protein] + phosphate. The catalysed reaction is O-phospho-L-threonyl-[protein] + H2O = L-threonyl-[protein] + phosphate. The chain is Probable protein phosphatase 2C 59 from Oryza sativa subsp. japonica (Rice).